Here is a 579-residue protein sequence, read N- to C-terminus: Plastidial pyruvate kinase 2 (579 aa).

A chloroplast-targeting transit peptide spans 1–63 (MAQVVATRSI…SRRVVDTTVR (63 aa)). The span at 6–24 (ATRSIQGSMLSPNGGSVST) shows a compositional bias: polar residues. Positions 6–26 (ATRSIQGSMLSPNGGSVSTRS) are disordered. Substrate is bound at residue arginine 140. Asparagine 142, serine 144, aspartate 175, and threonine 176 together coordinate K(+). ATP is bound at residue 142–145 (NMSH). Arginine 182 serves as a coordination point for ATP. Position 325 (lysine 325) interacts with substrate. Residue glutamate 327 participates in Mg(2+) binding. Residues glycine 350, aspartate 351, and threonine 383 each contribute to the substrate site. Aspartate 351 contacts Mg(2+).

This sequence belongs to the pyruvate kinase family. As to quaternary structure, oligomer of alpha and beta subunits. Mg(2+) serves as cofactor. Requires K(+) as cofactor. Mostly expressed in seeds, and, to a lower extent, in roots, leaves (veins and trichomes), inflorescences, siliques, pollen (grains and tubes) and flowers (sepals and petals).

The protein resides in the plastid. It localises to the chloroplast stroma. It is found in the mitochondrion. It carries out the reaction pyruvate + ATP = phosphoenolpyruvate + ADP + H(+). The protein operates within carbohydrate degradation; glycolysis; pyruvate from D-glyceraldehyde 3-phosphate: step 5/5. Its function is as follows. Required for plastidial pyruvate kinase activity. Involved in seed oil accumulation, embryo development and seed storage compounds mobilization upon germination. This chain is Plastidial pyruvate kinase 2 (PKP2), found in Arabidopsis thaliana (Mouse-ear cress).